Reading from the N-terminus, the 275-residue chain is 4-hydroxy-3-methylbut-2-enyl diphosphate reductase (275 aa).

Cysteine 12 serves as a coordination point for [4Fe-4S] cluster. 2 residues coordinate (2E)-4-hydroxy-3-methylbut-2-enyl diphosphate: histidine 40 and histidine 70. Dimethylallyl diphosphate is bound by residues histidine 40 and histidine 70. Residues histidine 40 and histidine 70 each contribute to the isopentenyl diphosphate site. Residue cysteine 92 coordinates [4Fe-4S] cluster. Histidine 119 is a (2E)-4-hydroxy-3-methylbut-2-enyl diphosphate binding site. Histidine 119 provides a ligand contact to dimethylallyl diphosphate. Histidine 119 contacts isopentenyl diphosphate. The active-site Proton donor is the glutamate 121. Threonine 151 contacts (2E)-4-hydroxy-3-methylbut-2-enyl diphosphate. [4Fe-4S] cluster is bound at residue cysteine 181. Residues serine 209, serine 210, asparagine 211, and serine 251 each contribute to the (2E)-4-hydroxy-3-methylbut-2-enyl diphosphate site. Serine 209, serine 210, asparagine 211, and serine 251 together coordinate dimethylallyl diphosphate. Positions 209, 210, 211, and 251 each coordinate isopentenyl diphosphate.

This sequence belongs to the IspH family. The cofactor is [4Fe-4S] cluster.

It catalyses the reaction isopentenyl diphosphate + 2 oxidized [2Fe-2S]-[ferredoxin] + H2O = (2E)-4-hydroxy-3-methylbut-2-enyl diphosphate + 2 reduced [2Fe-2S]-[ferredoxin] + 2 H(+). The catalysed reaction is dimethylallyl diphosphate + 2 oxidized [2Fe-2S]-[ferredoxin] + H2O = (2E)-4-hydroxy-3-methylbut-2-enyl diphosphate + 2 reduced [2Fe-2S]-[ferredoxin] + 2 H(+). It functions in the pathway isoprenoid biosynthesis; dimethylallyl diphosphate biosynthesis; dimethylallyl diphosphate from (2E)-4-hydroxy-3-methylbutenyl diphosphate: step 1/1. The protein operates within isoprenoid biosynthesis; isopentenyl diphosphate biosynthesis via DXP pathway; isopentenyl diphosphate from 1-deoxy-D-xylulose 5-phosphate: step 6/6. Its function is as follows. Catalyzes the conversion of 1-hydroxy-2-methyl-2-(E)-butenyl 4-diphosphate (HMBPP) into a mixture of isopentenyl diphosphate (IPP) and dimethylallyl diphosphate (DMAPP). Acts in the terminal step of the DOXP/MEP pathway for isoprenoid precursor biosynthesis. The chain is 4-hydroxy-3-methylbut-2-enyl diphosphate reductase from Thermotoga maritima (strain ATCC 43589 / DSM 3109 / JCM 10099 / NBRC 100826 / MSB8).